Reading from the N-terminus, the 100-residue chain is ATP-dependent Clp protease adapter protein ClpS (100 aa).

This sequence belongs to the ClpS family. In terms of assembly, binds to the N-terminal domain of the chaperone ClpA.

Its function is as follows. Involved in the modulation of the specificity of the ClpAP-mediated ATP-dependent protein degradation. This chain is ATP-dependent Clp protease adapter protein ClpS, found in Nitratidesulfovibrio vulgaris (strain DSM 19637 / Miyazaki F) (Desulfovibrio vulgaris).